Reading from the N-terminus, the 538-residue chain is Non-specific phospholipase C4 (538 aa).

Residues K91–Q112 are disordered.

Belongs to the bacterial phospholipase C family. Expressed in root tips, cotyledons, on leaf margins, stems, young anthers and funiculus.

Its subcellular location is the cell membrane. It catalyses the reaction a 1,2-diacyl-sn-glycero-3-phosphocholine + H2O = phosphocholine + a 1,2-diacyl-sn-glycerol + H(+). In terms of biological role, non-specific phospholipase C (PLC) which assumes major PLC activity during inorganic phosphate starvation. Substrate preference is phosphatidylcholine (PC), but can also hydrolyze phosphatidylethanolamine (PE) with lower efficiency. Has no activity toward phosphatidic acid (PA). Plays an important role in the supply of both inorganic phosphate and diacylglycerol from membrane-localized phospholipids during phosphate deprivation. May be required for lipid-derived signaling molecules that positively modulate abscisic acid (ABA) response and promote plant tolerance to drought and salt stresses. May be involved in brassinolide-mediated signaling in root development. This chain is Non-specific phospholipase C4 (NPC4), found in Arabidopsis thaliana (Mouse-ear cress).